The following is a 495-amino-acid chain: UDP-N-acetylmuramoyl-L-alanyl-D-glutamate--2,6-diaminopimelate ligase (495 aa).

UDP-N-acetyl-alpha-D-muramoyl-L-alanyl-D-glutamate contacts are provided by residues L27, S29, and 44–46; that span reads HQA. Position 116–122 (116–122) interacts with ATP; it reads GTNGKTT. UDP-N-acetyl-alpha-D-muramoyl-L-alanyl-D-glutamate-binding positions include N157, 158–159, S185, Q191, and R193; that span reads TT. K225 bears the N6-carboxylysine mark. Meso-2,6-diaminopimelate contacts are provided by residues R390, 414–417, G465, and E469; that span reads DNPR. The short motif at 414 to 417 is the Meso-diaminopimelate recognition motif element; it reads DNPR.

This sequence belongs to the MurCDEF family. MurE subfamily. Mg(2+) serves as cofactor. Post-translationally, carboxylation is probably crucial for Mg(2+) binding and, consequently, for the gamma-phosphate positioning of ATP.

Its subcellular location is the cytoplasm. It catalyses the reaction UDP-N-acetyl-alpha-D-muramoyl-L-alanyl-D-glutamate + meso-2,6-diaminopimelate + ATP = UDP-N-acetyl-alpha-D-muramoyl-L-alanyl-gamma-D-glutamyl-meso-2,6-diaminopimelate + ADP + phosphate + H(+). It participates in cell wall biogenesis; peptidoglycan biosynthesis. Catalyzes the addition of meso-diaminopimelic acid to the nucleotide precursor UDP-N-acetylmuramoyl-L-alanyl-D-glutamate (UMAG) in the biosynthesis of bacterial cell-wall peptidoglycan. The sequence is that of UDP-N-acetylmuramoyl-L-alanyl-D-glutamate--2,6-diaminopimelate ligase from Escherichia coli O6:H1 (strain CFT073 / ATCC 700928 / UPEC).